The following is a 200-amino-acid chain: Ependymin-related protein 1 (200 aa).

Residues 1–17 (MILQAALFLAGLTVVSG) form the signal peptide. N-linked (GlcNAc...) asparagine glycosylation is found at asparagine 36, asparagine 124, and asparagine 136.

It belongs to the ependymin family. Component of the acid-soluble and acid-insoluble organic matrix of prismatic shell layers (at protein level). Expressed discontinuously in the anterior zone of the outer fold of the mantle where its expression correlates with shell pigmentation.

The protein localises to the secreted. The protein is Ependymin-related protein 1 of Haliotis asinina (Donkey's ear abalone).